A 212-amino-acid polypeptide reads, in one-letter code: Kynurenine formamidase (212 aa).

Trp-18 provides a ligand contact to substrate. The Zn(2+) site is built by His-48, His-52, and Asp-54. The Proton donor/acceptor role is filled by His-58. Positions 160 and 172 each coordinate Zn(2+).

Belongs to the Cyclase 1 superfamily. KynB family. Homodimer. The cofactor is Zn(2+).

It carries out the reaction N-formyl-L-kynurenine + H2O = L-kynurenine + formate + H(+). It functions in the pathway amino-acid degradation; L-tryptophan degradation via kynurenine pathway; L-kynurenine from L-tryptophan: step 2/2. Functionally, catalyzes the hydrolysis of N-formyl-L-kynurenine to L-kynurenine, the second step in the kynurenine pathway of tryptophan degradation. The polypeptide is Kynurenine formamidase (Paraburkholderia phytofirmans (strain DSM 17436 / LMG 22146 / PsJN) (Burkholderia phytofirmans)).